The following is a 262-amino-acid chain: Lysine 5,6-aminomutase beta subunit (262 aa).

Residues 120 to 262 enclose the B12-binding domain; sequence KIVVVGASTG…VKTLNDRMNS (143 aa). Residues 130 to 136 and His133 each bind adenosylcob(III)alamin; that span reads TDAHTVG. Lys144 carries the post-translational modification N6-(pyridoxal phosphate)lysine. Adenosylcob(III)alamin contacts are provided by residues 185 to 192, 219 to 223, and 239 to 244; these read LVSQTVTQ, LCGGP, and FGPGRF.

This sequence belongs to the KamE family. As to quaternary structure, heterotetramer of 2 alpha and 2 beta subunits. Requires adenosylcob(III)alamin as cofactor. It depends on pyridoxal 5'-phosphate as a cofactor.

The enzyme catalyses (3S)-3,6-diaminohexanoate = (3S,5S)-3,5-diaminohexanoate. It catalyses the reaction D-lysine = (2R,5S)-2,5-diaminohexanoate. Its pathway is amino-acid metabolism; lysine degradation. Its activity is regulated as follows. Rapidly inactivated in the presence of D-lysine and to a lesser extent in the absence of adenosylcobalamin (Adocbl). Activity is stable in the presence of Adocbl when D-lysine is absent. Adocbl imparts thermal stability at 37 degrees Celsius. Catalyzes the migration of the L-beta-lysine and D-lysine epsilon amino group to the delta carbon to produce 3,5-diaminohexanoate and 2,5-diaminohexanoate, respectively. This chain is Lysine 5,6-aminomutase beta subunit (kamE), found in Acetoanaerobium sticklandii (strain ATCC 12662 / DSM 519 / JCM 1433 / CCUG 9281 / NCIMB 10654 / HF) (Clostridium sticklandii).